The primary structure comprises 391 residues: Homocysteine-responsive endoplasmic reticulum-resident ubiquitin-like domain member 1 protein (391 aa).

At Met1 the chain carries N-acetylmethionine. Over 1-263 (MESETEPEPV…VEEDDEINRD (263 aa)) the chain is Cytoplasmic. In terms of domain architecture, Ubiquitin-like spans 10–72 (VTLLVKSPNQ…LLDHQCLRDL (63 aa)). The tract at residues 100–126 (KVAESTEEPAGSNRGQYPEDSSSDGLR) is disordered. Polar residues predominate over residues 112–124 (NRGQYPEDSSSDG). The interaction with UBQLN1 stretch occupies residues 115–200 (QYPEDSSSDG…ASGAFVPPPS (86 aa)). Residue Ser135 is modified to Phosphoserine. The tract at residues 170-190 (LSWFQQIYARQYYMQYLAATA) is interaction with SYVN1. The helical transmembrane segment at 264–284 (WLDWTYSAATFSVFLSILYFY) threads the bilayer. The Lumenal segment spans residues 285–289 (SSLSR). Residues 290–310 (FLMVMGATVVMYLHHVGWFPF) form a helical membrane-spanning segment. The Cytoplasmic segment spans residues 311–391 (RPRPVQNFPN…LPEGPPAIAN (81 aa)). Positions 318–359 (FPNDGPPPDVVNQDPNNNLQEGTDPETEDPNHLPPDRDVLDG) are disordered. Basic and acidic residues predominate over residues 346–357 (DPNHLPPDRDVL).

As to quaternary structure, interacts with PSEN1 and PSEN2. Interacts with UBXN6. Interacts with UBQLN1, UBQLN2 and UBQLN4. Component of the HRD1 complex, which comprises at least SYNV1/HRD1, FAM8A1, HERPUD1/HERP, OS9, SEL1L and UBE2J1. FAM8A1 binding to SYNV1 may promote recruitment of HERPUD1 to the HRD1 complex. As to expression, widely expressed; in the brain, expression seems to be restricted to neurons and vascular smooth muscle cells. Present in activated microglia in senile plaques in the brain of patients with Alzheimer disease.

It is found in the endoplasmic reticulum membrane. In terms of biological role, component of the endoplasmic reticulum quality control (ERQC) system also called ER-associated degradation (ERAD) involved in ubiquitin-dependent degradation of misfolded endoplasmic reticulum proteins. Could enhance presenilin-mediated amyloid-beta protein 40 generation. Binds to ubiquilins and this interaction is required for efficient degradation of CD3D via the ERAD pathway. This is Homocysteine-responsive endoplasmic reticulum-resident ubiquitin-like domain member 1 protein (HERPUD1) from Homo sapiens (Human).